A 732-amino-acid chain; its full sequence is 1,4-alpha-glucan branching enzyme GlgB (732 aa).

Catalysis depends on aspartate 409, which acts as the Nucleophile. Glutamate 462 (proton donor) is an active-site residue.

The protein belongs to the glycosyl hydrolase 13 family. GlgB subfamily. As to quaternary structure, monomer.

It carries out the reaction Transfers a segment of a (1-&gt;4)-alpha-D-glucan chain to a primary hydroxy group in a similar glucan chain.. It participates in glycan biosynthesis; glycogen biosynthesis. Its function is as follows. Catalyzes the formation of the alpha-1,6-glucosidic linkages in glycogen by scission of a 1,4-alpha-linked oligosaccharide from growing alpha-1,4-glucan chains and the subsequent attachment of the oligosaccharide to the alpha-1,6 position. In Corynebacterium diphtheriae (strain ATCC 700971 / NCTC 13129 / Biotype gravis), this protein is 1,4-alpha-glucan branching enzyme GlgB.